Reading from the N-terminus, the 188-residue chain is Large ribosomal subunit protein uL5 (188 aa).

Belongs to the universal ribosomal protein uL5 family. As to quaternary structure, part of the 50S ribosomal subunit; contacts the 5S rRNA and probably tRNA. Forms a bridge to the 30S subunit in the 70S ribosome.

This is one of the proteins that bind and probably mediate the attachment of the 5S RNA into the large ribosomal subunit, where it forms part of the central protuberance. In the 70S ribosome it contacts protein S13 of the 30S subunit (bridge B1b), connecting the 2 subunits; this bridge is implicated in subunit movement. May contact the P site tRNA; the 5S rRNA and some of its associated proteins might help stabilize positioning of ribosome-bound tRNAs. This chain is Large ribosomal subunit protein uL5, found in Pyrococcus abyssi (strain GE5 / Orsay).